We begin with the raw amino-acid sequence, 166 residues long: UPF0254 protein Mevan_0254 (166 aa).

It belongs to the UPF0254 family.

In Methanococcus vannielii (strain ATCC 35089 / DSM 1224 / JCM 13029 / OCM 148 / SB), this protein is UPF0254 protein Mevan_0254.